A 540-amino-acid chain; its full sequence is MAAKQLIFGDAARQSILKGVTLLTDAVKATLGPRGRNVVIERKFGSPNVTKDGVTVAKEIDLKEPFENMGAQLVREVASKTSDVAGDGTTTATVLAYAIYKEGLKYVSAGANSMDLKRGIDKAVEAVVEELKKISKPVVDKKEIAQVGTISANNDVSIGELIAEAMDKVGKDGVITVEEAKGMATTLDIVEGMQFDRGYISPYFITDPERLECILEDAFVLIHDKKISTMKDLLPILEQIARMGRPLLIIAEDVEGEALATLVVNKLRGVLQVCAVKAPGFGERRKAMLEDIAILTGGTVISEDIGLKLENVKVEDLGKAKKIIIDKDNTTIVEGAGDPQKIQARIKQIKVQIDETTSDYDREKLQERLAKLAGGVARINVGAATEAEMKEKKARVEDALNATRAAVEEGIVPGGGVALLRCQKALEKIKFENHDQQLGAEIVKKALEEPIKQIIANAGVEATLIVEKVKENKNINYGYDAYAEKFVDMMEAGIIDPTKVTRTALQNAASVAGLMLTTEVLVAEIPEEEKKPPMPSPDMY.

Residues 30–33, Lys51, 87–91, Gly415, and Asp496 each bind ATP; these read TLGP and DGTTT.

Belongs to the chaperonin (HSP60) family. As to quaternary structure, forms a cylinder of 14 subunits composed of two heptameric rings stacked back-to-back. Interacts with the co-chaperonin GroES.

It localises to the cytoplasm. The catalysed reaction is ATP + H2O + a folded polypeptide = ADP + phosphate + an unfolded polypeptide.. Together with its co-chaperonin GroES, plays an essential role in assisting protein folding. The GroEL-GroES system forms a nano-cage that allows encapsulation of the non-native substrate proteins and provides a physical environment optimized to promote and accelerate protein folding. This is Chaperonin GroEL from Thermodesulfovibrio yellowstonii (strain ATCC 51303 / DSM 11347 / YP87).